Reading from the N-terminus, the 388-residue chain is Succinate--CoA ligase [ADP-forming] subunit beta (388 aa).

An ATP-grasp domain is found at 9–244 (KEIFRSMGVA…LEEEDPKEIE (236 aa)). Residues Lys-46, 53–55 (GRG), Glu-99, Cys-102, and Glu-107 each bind ATP. Mg(2+)-binding residues include Asn-199 and Asp-213. Substrate contacts are provided by residues Asn-264 and 321–323 (GIM).

This sequence belongs to the succinate/malate CoA ligase beta subunit family. In terms of assembly, heterotetramer of two alpha and two beta subunits. Mg(2+) is required as a cofactor.

It catalyses the reaction succinate + ATP + CoA = succinyl-CoA + ADP + phosphate. The enzyme catalyses GTP + succinate + CoA = succinyl-CoA + GDP + phosphate. The protein operates within carbohydrate metabolism; tricarboxylic acid cycle; succinate from succinyl-CoA (ligase route): step 1/1. Functionally, succinyl-CoA synthetase functions in the citric acid cycle (TCA), coupling the hydrolysis of succinyl-CoA to the synthesis of either ATP or GTP and thus represents the only step of substrate-level phosphorylation in the TCA. The beta subunit provides nucleotide specificity of the enzyme and binds the substrate succinate, while the binding sites for coenzyme A and phosphate are found in the alpha subunit. This chain is Succinate--CoA ligase [ADP-forming] subunit beta, found in Staphylococcus aureus (strain bovine RF122 / ET3-1).